A 302-amino-acid chain; its full sequence is tRNA dimethylallyltransferase (302 aa).

An ATP-binding site is contributed by 9–16 (GATATGKS). 11-16 (TATGKS) provides a ligand contact to substrate. An interaction with substrate tRNA region spans residues 34-37 (DSRQ).

Belongs to the IPP transferase family. Monomer. It depends on Mg(2+) as a cofactor.

It catalyses the reaction adenosine(37) in tRNA + dimethylallyl diphosphate = N(6)-dimethylallyladenosine(37) in tRNA + diphosphate. Its function is as follows. Catalyzes the transfer of a dimethylallyl group onto the adenine at position 37 in tRNAs that read codons beginning with uridine, leading to the formation of N6-(dimethylallyl)adenosine (i(6)A). This is tRNA dimethylallyltransferase from Nostoc punctiforme (strain ATCC 29133 / PCC 73102).